We begin with the raw amino-acid sequence, 582 residues long: ATP-dependent lipid A-core flippase (582 aa).

The next 5 membrane-spanning stretches (helical) occupy residues 16–36, 69–89, 153–173, 250–270, and 275–295; these read LWPH…ALVI, FIIL…GYCM, IIGL…VLVV, LANP…LYLA, and IKET…FGLL. Positions 29-310 constitute an ABC transmembrane type-1 domain; sequence VAVVALVINA…LTSVTSDFQR (282 aa). The region spanning 342–578 is the ABC transporter domain; sequence IKVDNVTFTY…DGAYAQLHRI (237 aa). 376–383 is a binding site for ATP; the sequence is GRSGSGKS.

This sequence belongs to the ABC transporter superfamily. Lipid exporter (TC 3.A.1.106) family. As to quaternary structure, homodimer.

The protein resides in the cell inner membrane. It carries out the reaction ATP + H2O + lipid A-core oligosaccharideSide 1 = ADP + phosphate + lipid A-core oligosaccharideSide 2.. Its function is as follows. Involved in lipopolysaccharide (LPS) biosynthesis. Translocates lipid A-core from the inner to the outer leaflet of the inner membrane. Transmembrane domains (TMD) form a pore in the inner membrane and the ATP-binding domain (NBD) is responsible for energy generation. This Aliivibrio fischeri (strain ATCC 700601 / ES114) (Vibrio fischeri) protein is ATP-dependent lipid A-core flippase.